The primary structure comprises 220 residues: Sericin-2 (220 aa).

2 stretches are compositionally biased toward low complexity: residues 1–131 (SSST…ASSS) and 141–155 (NESSSSSSSAAQNSA). A disordered region spans residues 1–220 (SSSTNNSSGS…SSSSSSWSSA (220 aa)). Residues 156 to 165 (TRSQVINADG) show a composition bias toward polar residues. Positions 166 to 220 (SQSSSSSSSSASNQASATSSSSVSADGSESESSSSSSSSSSSSSESSSSSSWSSA) are enriched in low complexity.

As to expression, produced exclusively in the middle (MSG) section of silk glands.

Its subcellular location is the secreted. Provides the silk fibroin thread with a sticky coating. Acts as a cement by sticking silk threads together. This chain is Sericin-2 (SER2), found in Galleria mellonella (Greater wax moth).